The sequence spans 397 residues: 2-acyl-1-lysophosphatidylinositol acyltransferase (397 aa).

The HXXXXD motif signature appears at 112 to 117; sequence HQIYTD.

This sequence belongs to the 1-acyl-sn-glycerol-3-phosphate acyltransferase family.

It localises to the lipid droplet. It catalyses the reaction 1-heptadecanoyl-sn-glycero-3-phosphate + octadecanoyl-CoA = 1-heptadecanoyl-2-octadecanoyl-sn-glycero-3-phosphate + CoA. It carries out the reaction 1-heptadecanoyl-sn-glycero-3-phosphate + tetradecanoyl-CoA = 1-heptadecanoyl-2-tetradecanoyl-sn-glycero-3-phosphate + CoA. The catalysed reaction is 1-heptadecanoyl-sn-glycero-3-phosphate + hexadecanoyl-CoA = 1-heptadecanoyl-2-hexadecanoyl-sn-glycero-3-phosphate + CoA. Functionally, acyltransferase with lysophosphatidic acid acyltransferase (LPAAT) activity. Fatty acyl substrates include 18:0-acyl-CoA, 16:0-acyl-CoA, 17:0-acyl-CoA and 14:0-acyl-CoA. Responsible for the acyl-CoA-dependent introduction of saturated very long chain fatty acids (VLCFAs) into phosphatidylinositol, transferring saturated FAs with 18 to 26 carbon atoms. Responsible for the incorporation of stearate into phosphatidylinositol. Overexpression has an effect on chromosome stability. Regulates phosphorylation and expression of glycerol-3-phosphate acyltransferase SCT1. The protein is 2-acyl-1-lysophosphatidylinositol acyltransferase of Saccharomyces cerevisiae (strain ATCC 204508 / S288c) (Baker's yeast).